Reading from the N-terminus, the 621-residue chain is Cystathionine gamma-synthase (621 aa).

Residue Lys429 is modified to N6-(pyridoxal phosphate)lysine.

Belongs to the trans-sulfuration enzymes family. MET7 subfamily. As to quaternary structure, both met-3 and met-7 are required to form a functional cystathionine gamma-synthase. Pyridoxal 5'-phosphate serves as cofactor.

It carries out the reaction O-succinyl-L-homoserine + L-cysteine = L,L-cystathionine + succinate + H(+). It functions in the pathway amino-acid biosynthesis; L-methionine biosynthesis via de novo pathway; L-cystathionine from O-succinyl-L-homoserine: step 1/1. In terms of biological role, catalyzes the formation of L-cystathionine from O-succinyl-L-homoserine (OSHS) and L-cysteine, via a gamma-replacement reaction. In the absence of thiol, catalyzes gamma-elimination to form 2-oxobutanoate, succinate and ammonia. The protein is Cystathionine gamma-synthase (met-7) of Neurospora crassa (strain ATCC 24698 / 74-OR23-1A / CBS 708.71 / DSM 1257 / FGSC 987).